The chain runs to 282 residues: 2-dehydro-3-deoxyphosphooctonate aldolase (282 aa).

This sequence belongs to the KdsA family.

Its subcellular location is the cytoplasm. It catalyses the reaction D-arabinose 5-phosphate + phosphoenolpyruvate + H2O = 3-deoxy-alpha-D-manno-2-octulosonate-8-phosphate + phosphate. The protein operates within carbohydrate biosynthesis; 3-deoxy-D-manno-octulosonate biosynthesis; 3-deoxy-D-manno-octulosonate from D-ribulose 5-phosphate: step 2/3. It participates in bacterial outer membrane biogenesis; lipopolysaccharide biosynthesis. In Shewanella baltica (strain OS185), this protein is 2-dehydro-3-deoxyphosphooctonate aldolase.